A 321-amino-acid chain; its full sequence is Beta-lactamase (321 aa).

The N-terminal stretch at 1-30 (MEKNRKKQIVVLSIALVCIFILVFSLFHKS) is a signal peptide. The Acyl-ester intermediate role is filled by S83. 233 to 235 (KTG) contributes to the substrate binding site.

The protein belongs to the class-A beta-lactamase family.

It carries out the reaction a beta-lactam + H2O = a substituted beta-amino acid. Its activity is regulated as follows. Inhibited by clavulanic acid. Functionally, can hydrolyze cephalosporins, penicillins and also cefoxitin; but at a slow rate. The polypeptide is Beta-lactamase (cfxA) (Phocaeicola vulgatus (Bacteroides vulgatus)).